We begin with the raw amino-acid sequence, 136 residues long: Large-conductance mechanosensitive channel (136 aa).

2 consecutive transmembrane segments (helical) span residues Ala9–Phe29 and Ile79–Ile99.

The protein belongs to the MscL family. As to quaternary structure, homopentamer.

The protein resides in the cell inner membrane. Its function is as follows. Channel that opens in response to stretch forces in the membrane lipid bilayer. May participate in the regulation of osmotic pressure changes within the cell. This chain is Large-conductance mechanosensitive channel, found in Shewanella putrefaciens (strain CN-32 / ATCC BAA-453).